A 248-amino-acid polypeptide reads, in one-letter code: Chitin deacetylase (248 aa).

Positions 1 to 26 (MHFSTLFGAAATAALAGSTNASPLAR) are cleaved as a signal peptide. 2 disulfides stabilise this stretch: C38/C237 and C148/C152. One can recognise a NodB homology domain in the interval 42 to 232 (GLVALTYDDG…TLKSKGYRAV (191 aa)). Catalysis depends on D49, which acts as the Proton acceptor. D49 is an acetate binding site. D50, H104, and H108 together coordinate Co(2+). Y145 provides a ligand contact to acetate. H206 (proton donor) is an active-site residue.

It belongs to the polysaccharide deacetylase family. In terms of assembly, monomer. Co(2+) serves as cofactor. In terms of processing, N-glycosylated.

Its subcellular location is the secreted. It carries out the reaction [(1-&gt;4)-N-acetyl-beta-D-glucosaminyl](n) + n H2O = chitosan + n acetate. Functionally, hydrolyzes the N-acetamido groups of N-acetyl-D-glucosamine polymers in chitin to form chitosan and acetate. May play a role in evasion of the host immune response; plant chitinases liberate chitin molecules from the fungal cell wall which act as elicitors of the plant immune response, deacetylation of the liberated chitin neutralizes elicitor activity. The chain is Chitin deacetylase from Colletotrichum lindemuthianum (Bean anthracnose fungus).